We begin with the raw amino-acid sequence, 215 residues long: Glycerol-3-phosphate acyltransferase (215 aa).

A run of 6 helical transmembrane segments spans residues 3–23 (LILL…LWIG), 42–61 (TNTF…LIDI), 68–90 (TLLP…FAVL), 110–130 (AGVL…VFVL), 134–154 (LFSM…ISVL), and 162–182 (LLPG…AIII).

This sequence belongs to the PlsY family. Probably interacts with PlsX.

Its subcellular location is the cell membrane. It catalyses the reaction an acyl phosphate + sn-glycerol 3-phosphate = a 1-acyl-sn-glycero-3-phosphate + phosphate. The protein operates within lipid metabolism; phospholipid metabolism. Its function is as follows. Catalyzes the transfer of an acyl group from acyl-phosphate (acyl-PO(4)) to glycerol-3-phosphate (G3P) to form lysophosphatidic acid (LPA). This enzyme utilizes acyl-phosphate as fatty acyl donor, but not acyl-CoA or acyl-ACP. The polypeptide is Glycerol-3-phosphate acyltransferase (Streptococcus equi subsp. zooepidemicus (strain H70)).